The following is a 140-amino-acid chain: Large ribosomal subunit protein uL16 (140 aa).

This sequence belongs to the universal ribosomal protein uL16 family. In terms of assembly, part of the 50S ribosomal subunit.

In terms of biological role, binds 23S rRNA and is also seen to make contacts with the A and possibly P site tRNAs. The protein is Large ribosomal subunit protein uL16 of Cytophaga hutchinsonii (strain ATCC 33406 / DSM 1761 / CIP 103989 / NBRC 15051 / NCIMB 9469 / D465).